A 1106-amino-acid polypeptide reads, in one-letter code: Platelet-derived growth factor receptor beta (1106 aa).

The first 32 residues, 1–32 (MRLPGAMPALALKGELLLLSLLLLLEPQISQG), serve as a signal peptide directing secretion. Ig-like C2-type domains are found at residues 33–120 (LVVT…YIFV), 129–210 (PNDA…YRLQ), 214–309 (INVS…INIT), 331–403 (HRSR…HEDA), and 416–524 (PVRV…VIVV). At 33-532 (LVVTPPGPEL…VVPHSLPFKV (500 aa)) the chain is on the extracellular side. 3 N-linked (GlcNAc...) asparagine glycosylation sites follow: asparagine 45, asparagine 89, and asparagine 103. Cysteine 54 and cysteine 100 are disulfide-bonded. A disulfide bridge connects residues cysteine 149 and cysteine 190. Residues asparagine 215 and asparagine 230 are each glycosylated (N-linked (GlcNAc...) asparagine). Cysteine 235 and cysteine 291 are joined by a disulfide. N-linked (GlcNAc...) asparagine glycans are attached at residues asparagine 292, asparagine 307, asparagine 354, asparagine 371, asparagine 468, and asparagine 479. Cysteine 436 and cysteine 508 form a disulfide bridge. The chain crosses the membrane as a helical span at residues 533 to 553 (VVISAILALVVLTIISLIILI). Residues 554–1106 (MLWQKKPRYE…PRAEAEDSFL (553 aa)) lie on the Cytoplasmic side of the membrane. A phosphotyrosine; by autocatalysis mark is found at tyrosine 562, tyrosine 579, and tyrosine 581. One can recognise a Protein kinase domain in the interval 600–962 (LVLGRTLGSG…QLVLLLERLL (363 aa)). ATP contacts are provided by residues 606–614 (LGSGAFGQV) and lysine 634. Position 686 is a phosphotyrosine; by ABL1 and ABL2 (tyrosine 686). 7 positions are modified to phosphotyrosine; by autocatalysis: tyrosine 716, tyrosine 740, tyrosine 751, tyrosine 763, tyrosine 771, tyrosine 775, and tyrosine 778. The Proton acceptor role is filled by aspartate 826. Tyrosine 857 carries the phosphotyrosine; by autocatalysis modification. 2 positions are modified to phosphotyrosine; by ABL1 and ABL2: tyrosine 934 and tyrosine 970. Tyrosine 1009 and tyrosine 1021 each carry phosphotyrosine; by autocatalysis. A disordered region spans residues 1019-1106 (NDYIIPLPDP…PRAEAEDSFL (88 aa)). The span at 1043-1060 (SLASSTLNEVNTSSTISC) shows a compositional bias: polar residues. Residues 1066-1088 (PQDEPEPEPQLELQVEPEPELEQ) show a composition bias toward acidic residues.

The protein belongs to the protein kinase superfamily. Tyr protein kinase family. CSF-1/PDGF receptor subfamily. In terms of assembly, interacts with homodimeric PDGFB and PDGFD, and with heterodimers formed by PDGFA and PDGFB. May also interact with homodimeric PDGFC. Monomer in the absence of bound ligand. Interaction with homodimeric PDGFB, heterodimers formed by PDGFA and PDGFB or homodimeric PDGFD, leads to receptor dimerization, where both PDGFRA homodimers and heterodimers with PDGFRB are observed. Interacts with SH2B2/APS. Interacts directly (tyrosine phosphorylated) with SHB. Interacts (tyrosine phosphorylated) with PIK3R1 and RASA1. Interacts (tyrosine phosphorylated) with CBL. Interacts (tyrosine phosphorylated) with SRC and SRC family kinases. Interacts (tyrosine phosphorylated) with PIK3C2B, maybe indirectly. Interacts (tyrosine phosphorylated) with SHC1, GRB7, GRB10 and NCK1. Interaction with GRB2 is mediated by SHC1. Interacts (via C-terminus) with NHERF1. Post-translationally, autophosphorylated on tyrosine residues upon ligand binding. Autophosphorylation occurs in trans, i.e. one subunit of the dimeric receptor phosphorylates tyrosine residues on the other subunit. Phosphorylation at Tyr-579, and to a lesser degree, at Tyr-581, is important for interaction with SRC family kinases. Phosphorylation at Tyr-740 and Tyr-751 is important for interaction with PIK3R1. Phosphorylation at Tyr-751 is important for interaction with NCK1. Phosphorylation at Tyr-771 and Tyr-857 is important for interaction with RASA1/GAP. Phosphorylation at Tyr-857 is important for efficient phosphorylation of PLCG1 and PTPN11, resulting in increased phosphorylation of AKT1, MAPK1/ERK2 and/or MAPK3/ERK1, PDCD6IP/ALIX and STAM, and in increased cell proliferation. Phosphorylation at Tyr-1009 is important for interaction with PTPN11. Phosphorylation at Tyr-1009 and Tyr-1021 is important for interaction with PLCG1. Phosphorylation at Tyr-1021 is important for interaction with CBL; PLCG1 and CBL compete for the same binding site. Dephosphorylated by PTPRJ at Tyr-751, Tyr-857, Tyr-1009 and Tyr-1021. Dephosphorylated by PTPN2 at Tyr-579 and Tyr-1021. N-glycosylated. In terms of processing, ubiquitinated. After autophosphorylation, the receptor is polyubiquitinated, leading to its degradation.

The protein resides in the cell membrane. The protein localises to the cytoplasmic vesicle. It is found in the lysosome lumen. The enzyme catalyses L-tyrosyl-[protein] + ATP = O-phospho-L-tyrosyl-[protein] + ADP + H(+). Its activity is regulated as follows. Present in an inactive conformation in the absence of bound ligand. Binding of PDGFB and/or PDGFD leads to dimerization and activation by autophosphorylation on tyrosine residues. Inhibited by imatinib. Functionally, tyrosine-protein kinase that acts as a cell-surface receptor for homodimeric PDGFB and PDGFD and for heterodimers formed by PDGFA and PDGFB, and plays an essential role in the regulation of embryonic development, cell proliferation, survival, differentiation, chemotaxis and migration. Plays an essential role in blood vessel development by promoting proliferation, migration and recruitment of pericytes and smooth muscle cells to endothelial cells. Plays a role in the migration of vascular smooth muscle cells and the formation of neointima at vascular injury sites. Required for normal development of the cardiovascular system. Required for normal recruitment of pericytes (mesangial cells) in the kidney glomerulus, and for normal formation of a branched network of capillaries in kidney glomeruli. Promotes rearrangement of the actin cytoskeleton and the formation of membrane ruffles. Binding of its cognate ligands - homodimeric PDGFB, heterodimers formed by PDGFA and PDGFB or homodimeric PDGFD -leads to the activation of several signaling cascades; the response depends on the nature of the bound ligand and is modulated by the formation of heterodimers between PDGFRA and PDGFRB. Phosphorylates PLCG1, PIK3R1, PTPN11, RASA1/GAP, CBL, SHC1 and NCK1. Activation of PLCG1 leads to the production of the cellular signaling molecules diacylglycerol and inositol 1,4,5-trisphosphate, mobilization of cytosolic Ca(2+) and the activation of protein kinase C. Phosphorylation of PIK3R1, the regulatory subunit of phosphatidylinositol 3-kinase, leads to the activation of the AKT1 signaling pathway. Phosphorylation of SHC1, or of the C-terminus of PTPN11, creates a binding site for GRB2, resulting in the activation of HRAS, RAF1 and down-stream MAP kinases, including MAPK1/ERK2 and/or MAPK3/ERK1. Promotes phosphorylation and activation of SRC family kinases. Promotes phosphorylation of PDCD6IP/ALIX and STAM. Receptor signaling is down-regulated by protein phosphatases that dephosphorylate the receptor and its down-stream effectors, and by rapid internalization of the activated receptor. This chain is Platelet-derived growth factor receptor beta (PDGFRB), found in Homo sapiens (Human).